Reading from the N-terminus, the 71-residue chain is Small ribosomal subunit protein bS21 (71 aa).

Over residues 48-59 (KAAAAVKRHAKK) the composition is skewed to basic residues. Residues 48–71 (KAAAAVKRHAKKVQRENRKFQRLY) are disordered. Residues 60–71 (VQRENRKFQRLY) are compositionally biased toward basic and acidic residues.

This sequence belongs to the bacterial ribosomal protein bS21 family.

The sequence is that of Small ribosomal subunit protein bS21 from Teredinibacter turnerae (strain ATCC 39867 / T7901).